We begin with the raw amino-acid sequence, 347 residues long: MTSVTVRPSATTLLEKHPNLRLRDILDTLPRSVYEINPLKAWSRVLLSVAAVVGCYALLAIAPWYLLLPVWFLTGTTLTGFFVIGHDCGHRSFSRKNWVNNLVGHLAFLPLIYPFHSWRILHNHHHRYTNNMDEDNAWAPFTPELYDDSPAFIKAVYRAIRGKLWWLASVIHQLKLHFNWFAFEGKQREQVRFSALFVIIAGAIAFPVMFYTLGVWGVVKFWLMPWLGYHFWMSTFTLVHHTVPEIPFSYRDKWNEAIAQLSGTVHCDYPKWVEVLCHDINVHVPHHLSTGIPSYNLRKAYASIKQNWGEYLYETKFSWELMKAITEQCHLYDAEHNYISFAQHQKR.

2 consecutive transmembrane segments (helical) span residues 41–63 and 67–85; these read AWSRVLLSVAAVVGCYALLAIAP and LLPVWFLTGTTLTGFFVIG. The Histidine box-1 motif lies at 86–90; sequence HDCGH. Residues 98–118 traverse the membrane as a helical segment; the sequence is WVNNLVGHLAFLPLIYPFHSW. The Histidine box-2 motif lies at 122 to 126; it reads HNHHH. Transmembrane regions (helical) follow at residues 164–184, 196–216, and 218–238; these read LWWLASVIHQLKLHFNWFAFE, LFVIIAGAIAFPVMFYTLGVW, and VVKFWLMPWLGYHFWMSTFTL. Positions 286-290 match the Histidine box-3 motif; that stretch reads HHLST.

The protein belongs to the fatty acid desaturase type 2 family. The cofactor is Fe(2+).

Its subcellular location is the membrane. The catalysed reaction is a 1-[(9Z)-octadecenoyl]-2-acyl-glycerolipid + 2 reduced [2Fe-2S]-[ferredoxin] + O2 + 2 H(+) = a 1-[(9Z,12Z)-octadecdienoyl]-2-acyl-glycerolipid + 2 oxidized [2Fe-2S]-[ferredoxin] + 2 H2O. It functions in the pathway lipid metabolism; polyunsaturated fatty acid biosynthesis. In terms of biological role, desaturase involved in fatty acid biosynthesis. Introduces a double bond at carbon 12 of oleoyl groups (18:1) attached to the sn-1 position of the glycerol moiety of membrane glycerolipids. Can also efficiently catalyze the desaturation of palmitoleic acid (16:1) in vitro. The sequence is that of sn-1 oleoyl-lipid 12-desaturase from Picosynechococcus sp. (strain ATCC 27264 / PCC 7002 / PR-6) (Agmenellum quadruplicatum).